The chain runs to 25 residues: M-poneritoxin-Nc2a (25 aa).

It belongs to the ponericin-L family. As to expression, expressed by the venom gland.

The protein localises to the secreted. The protein resides in the target cell membrane. Its function is as follows. Membrane-perturbating peptide with multiple activities. It is insecticidal, since it induces reversible paralysis in insects (L.cuprina) after 1 hour, but fails to kill them. It shows moderate antibacterial activity against some Gram-positive and Gram-negative bacteria. It is also antiparasitic, since it moderately inhibits the larval development of the major pathogenic nematode of ruminants (H.contortus, IC(50)=23.2 uM), but fails to reduce the motility of adult males of the other nematode B.malayi. It also shows moderate cytotoxic activity against HEK293 cells (EC(50)=48-57 uM) but does not induce hemolysis in human erythrocytes. It also causes a moderate increase in intracellular calcium concentration on neuronal and epithelial cell lines, which supports a non-specific membrane perturbation mechanism of action. The polypeptide is M-poneritoxin-Nc2a (Neoponera commutata (Large hunting ant)).